The primary structure comprises 150 residues: MTNSFQNSRRDLRERAFQALFNIEMGAELLAASQFAYGYDKVTGEDAQVLELPIFLLSLVMGVNNHKEELDNLISTHLKKGWSLERLTLTDKTLLRLGLFEIKYFDETPDRVALNEIIEVAKKYSDETSAKFINGLLSQYVSEAPSANKS.

It belongs to the NusB family.

Involved in transcription antitermination. Required for transcription of ribosomal RNA (rRNA) genes. Binds specifically to the boxA antiterminator sequence of the ribosomal RNA (rrn) operons. The protein is Transcription antitermination protein NusB of Streptococcus pyogenes serotype M4 (strain MGAS10750).